The sequence spans 236 residues: Large ribosomal subunit protein uL1 (236 aa).

This sequence belongs to the universal ribosomal protein uL1 family. In terms of assembly, part of the 50S ribosomal subunit.

Binds directly to 23S rRNA. The L1 stalk is quite mobile in the ribosome, and is involved in E site tRNA release. Functionally, protein L1 is also a translational repressor protein, it controls the translation of the L11 operon by binding to its mRNA. In Corynebacterium glutamicum (strain R), this protein is Large ribosomal subunit protein uL1.